The primary structure comprises 75 residues: HSQGTFTNDYSKYMDTRRAQDFVQWLMSTXXXXXXXXXXXXXXXYADAPYISDVYSYLQDQVAKKWLKSGQDRRE.

This sequence belongs to the glucagon family.

It is found in the secreted. Functionally, plays a key role in glucose metabolism and homeostasis. Regulates blood glucose by increasing gluconeogenesis and decreasing glycolysis. This Amia calva (Bowfin) protein is Pro-glucagon (gcg).